Here is a 516-residue protein sequence, read N- to C-terminus: Cytochrome P450 monooxygenase dtxS2 (516 aa).

Residues 23–43 (ILASVIVLLGLKVATILYTAF) traverse the membrane as a helical segment. Residue asparagine 187 is glycosylated (N-linked (GlcNAc...) asparagine). A helical membrane pass occupies residues 229–249 (VLVPLLVFPYISWLLVWWLLS). Cysteine 458 lines the heme pocket.

The protein belongs to the cytochrome P450 family. Requires heme as cofactor.

The protein localises to the membrane. It participates in secondary metabolite biosynthesis. Its function is as follows. Cytochrome P450 monooxygenase; part of the gene cluster that mediates the biosynthesis of destruxins, insecticidal cyclic hexadepsipeptides which induce flaccid paralysis and visceral muscle contraction in insects through targeting the calcium channels and vacuolar-type ATPases. The aldo-keto reductase dtxS3 converts alpha-ketoisocaproic acid from deaminated leucine into alpha-hydroxyisocaproic acid (HIC), which is the first substrate for destruxin assembly by dtxS1. L-aspartate decarboxylase dtxS4 converts aspartic acid into beta-alanine, the last substrate for the destruxin assembly line performed by dtxS1. The nonribosomal peptide synthetase dtxS1 synthesizes destruxins B and B2, whereas the cytochrome P450 monooxygenase dtxS2 is required to convert destruxin B into other destruxin derivatives, including destructins C, D, A and E. Destruxin E-diol (ED) is further produced in a non-enzymatic manner from destruxin E. Destruxins play an important role in virulence and escape from insect host immune defenses. The polypeptide is Cytochrome P450 monooxygenase dtxS2 (Metarhizium robertsii (strain ARSEF 23 / ATCC MYA-3075) (Metarhizium anisopliae (strain ARSEF 23))).